Here is a 261-residue protein sequence, read N- to C-terminus: uncharacterized protein (261 aa).

This is an uncharacterized protein from Methanocaldococcus jannaschii (strain ATCC 43067 / DSM 2661 / JAL-1 / JCM 10045 / NBRC 100440) (Methanococcus jannaschii).